A 104-amino-acid chain; its full sequence is L-rhamnose mutarotase (104 aa).

Y18 contributes to the substrate binding site. Catalysis depends on H22, which acts as the Proton donor. Substrate is bound by residues Y41 and 76-77 (WW).

It belongs to the rhamnose mutarotase family. Homodimer.

The protein resides in the cytoplasm. It carries out the reaction alpha-L-rhamnose = beta-L-rhamnose. Its pathway is carbohydrate metabolism; L-rhamnose metabolism. Involved in the anomeric conversion of L-rhamnose. The polypeptide is L-rhamnose mutarotase (Listeria monocytogenes serovar 1/2a (strain ATCC BAA-679 / EGD-e)).